We begin with the raw amino-acid sequence, 359 residues long: 3-dehydroquinate synthase (359 aa).

NAD(+) is bound by residues 72–77 (EGEIHK), 106–110 (GVIGD), 130–131 (TS), K143, K152, and 170–173 (CLKT). Zn(2+) is bound by residues E185, H248, and H264.

Belongs to the sugar phosphate cyclases superfamily. Dehydroquinate synthase family. Requires Co(2+) as cofactor. Zn(2+) serves as cofactor. NAD(+) is required as a cofactor.

The protein resides in the cytoplasm. It carries out the reaction 7-phospho-2-dehydro-3-deoxy-D-arabino-heptonate = 3-dehydroquinate + phosphate. Its pathway is metabolic intermediate biosynthesis; chorismate biosynthesis; chorismate from D-erythrose 4-phosphate and phosphoenolpyruvate: step 2/7. In terms of biological role, catalyzes the conversion of 3-deoxy-D-arabino-heptulosonate 7-phosphate (DAHP) to dehydroquinate (DHQ). The sequence is that of 3-dehydroquinate synthase from Dehalococcoides mccartyi (strain CBDB1).